The primary structure comprises 1208 residues: Urease accessory protein 2 (1208 aa).

2 coiled-coil regions span residues 187-362 and 400-469; these read RDKI…EKAA and IKAL…MHEQ. One can recognise an SMC hinge domain in the interval 523-633; that stretch reads DGVFGPLYDL…ICEDLQTAAH (111 aa). Coiled coils occupy residues 688–771 and 817–903; these read HIEV…YEEE and NRLE…VQTQ. Residues 748-773 form a disordered region; the sequence is ESSLEEAEGASRDAKAKRASYEEELR. The span at 756 to 773 shows a compositional bias: basic and acidic residues; the sequence is GASRDAKAKRASYEEELR.

It belongs to the SMC family. SMC3 subfamily. In terms of assembly, component of cohesin complexes.

The protein localises to the nucleus. Central component of cohesin, a complex required for chromosome cohesion during the cell cycle. The cohesin complex may form a large proteinaceous ring within which sister chromatids can be trapped. At anaphase, the complex is cleaved and dissociates from chromatin, allowing sister chromatids to segregate. Cohesion is coupled to DNA replication and is involved in DNA repair. The cohesin complex also plays an important role in spindle pole assembly during mitosis and in chromosomes movement. Is unrelated to urease function in C.neoformans. This Cryptococcus neoformans var. grubii serotype A (strain H99 / ATCC 208821 / CBS 10515 / FGSC 9487) (Filobasidiella neoformans var. grubii) protein is Urease accessory protein 2.